The chain runs to 56 residues: Male-specific sperm protein Mst87F (56 aa).

The protein belongs to the MST(3)CGP family. In terms of tissue distribution, testis.

The sequence is that of Male-specific sperm protein Mst87F (Mst87F) from Drosophila melanogaster (Fruit fly).